Consider the following 264-residue polypeptide: MKQYLELLNRVLTEGVRKEDRTGTGTISVFGHQMRFNLEEGFPLLTTKKLHLKSIIYELLWFLNGDTNVKYLQDHGVRIWNEWADADGSLGHIYGYQWRSWPDYKGGSIDQITEAVETIKHNPDSRRIIVSAWNVADLDNMNLPPCHAFFQFYVANGRLSLQLYQRSADIFLGVPFNIASYALLLQMMAQATGLKAGDFVHTLGDAHIYSNHLEQVKLQLTREPRALPRMEINPDVKSIFDFKFEDFNLTGYDPHPHIKGEVAV.

DUMP is bound at residue Arg-21. His-51 serves as a coordination point for (6R)-5,10-methylene-5,6,7,8-tetrahydrofolate. A dUMP-binding site is contributed by 126 to 127 (RR). Cys-146 serves as the catalytic Nucleophile. Residues 166-169 (RSAD), Asn-177, and 207-209 (HIY) each bind dUMP. Residue Asp-169 coordinates (6R)-5,10-methylene-5,6,7,8-tetrahydrofolate. (6R)-5,10-methylene-5,6,7,8-tetrahydrofolate is bound at residue Ala-263.

It belongs to the thymidylate synthase family. Bacterial-type ThyA subfamily. Homodimer.

Its subcellular location is the cytoplasm. It carries out the reaction dUMP + (6R)-5,10-methylene-5,6,7,8-tetrahydrofolate = 7,8-dihydrofolate + dTMP. It participates in pyrimidine metabolism; dTTP biosynthesis. Catalyzes the reductive methylation of 2'-deoxyuridine-5'-monophosphate (dUMP) to 2'-deoxythymidine-5'-monophosphate (dTMP) while utilizing 5,10-methylenetetrahydrofolate (mTHF) as the methyl donor and reductant in the reaction, yielding dihydrofolate (DHF) as a by-product. This enzymatic reaction provides an intracellular de novo source of dTMP, an essential precursor for DNA biosynthesis. This is Thymidylate synthase from Parabacteroides distasonis (strain ATCC 8503 / DSM 20701 / CIP 104284 / JCM 5825 / NCTC 11152).